The chain runs to 966 residues: Aminopeptidase N (966 aa).

The Cytoplasmic portion of the chain corresponds to 1-8 (MAKGFYIS). Residues 9-32 (KSLGILGILLGVAALCTIVALSVV) form a helical; Signal-anchor for type II membrane protein membrane-spanning segment. The tract at residues 33-65 (YRQEKNKNTSQSPSMAPLNPTATSSPATTLDQN) is cytosolic Ser/Thr-rich junction. Topologically, residues 33–966 (YRQEKNKNTS…VLAWFTANSA (934 aa)) are extracellular. Asn-40 and Asn-125 each carry an N-linked (GlcNAc...) asparagine glycan. The disordered stretch occupies residues 40 to 61 (NTSQSPSMAPLNPTATSSPATT). Residues 66–966 (LPWNRYRLPK…VLAWFTANSA (901 aa)) are metalloprotease. Tyr-173 carries the post-translational modification Sulfotyrosine. N-linked (GlcNAc...) asparagine glycans are attached at residues Asn-259 and Asn-315. Residue 348–352 (GAMEN) participates in substrate binding. His-384 serves as a coordination point for Zn(2+). The active-site Proton acceptor is Glu-385. Residues His-388 and Glu-407 each contribute to the Zn(2+) site. 2 positions are modified to sulfotyrosine: Tyr-415 and Tyr-420. Asn-552, Asn-570, Asn-624, and Asn-734 each carry an N-linked (GlcNAc...) asparagine glycan. Disulfide bonds link Cys-760/Cys-767 and Cys-797/Cys-833. Asn-817 is a glycosylation site (N-linked (GlcNAc...) asparagine). Residue Tyr-852 is modified to Phosphotyrosine. Position 912 is a sulfotyrosine (Tyr-912).

This sequence belongs to the peptidase M1 family. Homodimer. Interacts with SLC6A19. The cofactor is Zn(2+). Sulfated. In terms of processing, N- and O-glycosylated. Post-translationally, may undergo proteolysis and give rise to a soluble form.

It localises to the cell membrane. The enzyme catalyses Release of an N-terminal amino acid, Xaa-|-Yaa- from a peptide, amide or arylamide. Xaa is preferably Ala, but may be most amino acids including Pro (slow action). When a terminal hydrophobic residue is followed by a prolyl residue, the two may be released as an intact Xaa-Pro dipeptide.. Functionally, broad specificity aminopeptidase which plays a role in the final digestion of peptides generated from hydrolysis of proteins by gastric and pancreatic proteases. Also involved in the processing of various peptides including peptide hormones, such as angiotensin III and IV, neuropeptides, and chemokines. May also be involved the cleavage of peptides bound to major histocompatibility complex class II molecules of antigen presenting cells. May have a role in angiogenesis and promote cholesterol crystallization. May have a role in amino acid transport by acting as binding partner of amino acid transporter SLC6A19 and regulating its activity. The protein is Aminopeptidase N (ANPEP) of Oryctolagus cuniculus (Rabbit).